The sequence spans 406 residues: Zinc finger protein CONSTANS-LIKE 6 (406 aa).

Zn(2+) is bound by residues Cys17, Cys20, Cys40, and His45. The B box-type; atypical zinc-finger motif lies at 17–59 (CDSCVKRRARWYCAADDAFLCHACDGSVHSANPLARRHERVRL). Residues 63 to 95 (SAGKYRHASPPHQATWHQGFTRKARTPRGGKKS) are disordered. Residues 82–95 (FTRKARTPRGGKKS) are compositionally biased toward basic residues. A CCT domain is found at 357–399 (REARVSRYREKRRTRLFSKKIRYEVRKLNAEKRPRMKGRFVKR).

This sequence belongs to the CONSTANS family.

The protein localises to the nucleus. This Arabidopsis thaliana (Mouse-ear cress) protein is Zinc finger protein CONSTANS-LIKE 6 (COL6).